The sequence spans 482 residues: ATP synthase subunit beta (482 aa).

An ATP-binding site is contributed by G168–T175.

This sequence belongs to the ATPase alpha/beta chains family. In terms of assembly, F-type ATPases have 2 components, CF(1) - the catalytic core - and CF(0) - the membrane proton channel. CF(1) has five subunits: alpha(3), beta(3), gamma(1), delta(1), epsilon(1). CF(0) has three main subunits: a(1), b(2) and c(9-12). The alpha and beta chains form an alternating ring which encloses part of the gamma chain. CF(1) is attached to CF(0) by a central stalk formed by the gamma and epsilon chains, while a peripheral stalk is formed by the delta and b chains.

The protein resides in the cell membrane. It carries out the reaction ATP + H2O + 4 H(+)(in) = ADP + phosphate + 5 H(+)(out). Functionally, produces ATP from ADP in the presence of a proton gradient across the membrane. The catalytic sites are hosted primarily by the beta subunits. The protein is ATP synthase subunit beta of Corynebacterium urealyticum (strain ATCC 43042 / DSM 7109).